Consider the following 194-residue polypeptide: Fe/S biogenesis protein NfuA (194 aa).

Cys152 and Cys155 together coordinate [4Fe-4S] cluster.

This sequence belongs to the NfuA family. In terms of assembly, homodimer. [4Fe-4S] cluster serves as cofactor.

In terms of biological role, involved in iron-sulfur cluster biogenesis. Binds a 4Fe-4S cluster, can transfer this cluster to apoproteins, and thereby intervenes in the maturation of Fe/S proteins. Could also act as a scaffold/chaperone for damaged Fe/S proteins. In Pseudomonas aeruginosa (strain LESB58), this protein is Fe/S biogenesis protein NfuA.